Here is a 362-residue protein sequence, read N- to C-terminus: Chorismate synthase (362 aa).

Arg-46 lines the NADP(+) pocket. FMN is bound by residues 121 to 123 (RAS), 237 to 238 (NA), Gly-277, 292 to 296 (KPTPS), and Arg-318.

It belongs to the chorismate synthase family. As to quaternary structure, homotetramer. Requires FMNH2 as cofactor.

The enzyme catalyses 5-O-(1-carboxyvinyl)-3-phosphoshikimate = chorismate + phosphate. It participates in metabolic intermediate biosynthesis; chorismate biosynthesis; chorismate from D-erythrose 4-phosphate and phosphoenolpyruvate: step 7/7. Its function is as follows. Catalyzes the anti-1,4-elimination of the C-3 phosphate and the C-6 proR hydrogen from 5-enolpyruvylshikimate-3-phosphate (EPSP) to yield chorismate, which is the branch point compound that serves as the starting substrate for the three terminal pathways of aromatic amino acid biosynthesis. This reaction introduces a second double bond into the aromatic ring system. This Campylobacter lari (strain RM2100 / D67 / ATCC BAA-1060) protein is Chorismate synthase.